A 412-amino-acid polypeptide reads, in one-letter code: LL-diaminopimelate aminotransferase (412 aa).

Substrate-binding residues include tyrosine 15 and glycine 42. Residues tyrosine 72, 108–109 (SK), tyrosine 132, asparagine 187, tyrosine 218, and 246–248 (SFS) contribute to the pyridoxal 5'-phosphate site. 3 residues coordinate substrate: lysine 109, tyrosine 132, and asparagine 187. Lysine 249 is modified (N6-(pyridoxal phosphate)lysine). Residues arginine 257 and asparagine 292 each contribute to the pyridoxal 5'-phosphate site. Substrate contacts are provided by asparagine 292 and arginine 388.

The protein belongs to the class-I pyridoxal-phosphate-dependent aminotransferase family. LL-diaminopimelate aminotransferase subfamily. Homodimer. Pyridoxal 5'-phosphate serves as cofactor.

It carries out the reaction (2S,6S)-2,6-diaminopimelate + 2-oxoglutarate = (S)-2,3,4,5-tetrahydrodipicolinate + L-glutamate + H2O + H(+). The protein operates within amino-acid biosynthesis; L-lysine biosynthesis via DAP pathway; LL-2,6-diaminopimelate from (S)-tetrahydrodipicolinate (aminotransferase route): step 1/1. In terms of biological role, involved in the synthesis of meso-diaminopimelate (m-DAP or DL-DAP), required for both lysine and peptidoglycan biosynthesis. Catalyzes the direct conversion of tetrahydrodipicolinate to LL-diaminopimelate. This chain is LL-diaminopimelate aminotransferase, found in Synechocystis sp. (strain ATCC 27184 / PCC 6803 / Kazusa).